A 211-amino-acid chain; its full sequence is MRLRNKPWAEDYLRKHNTVVDLDGTHAGKMSEWFEKDQPIYIEVGSGMGQFITELAAQHPEVNFVSLERDKNVMIRVLDKVLEKDLQNIKLICNDAMELTDYFKDGEVDRVYLNFSDPWPKKRHAKRRLTYHSFLALYKAILKDEGEIHFKTDNRGLFAYSLESMSQFGMYFTKINLNLHDEDDEDNIETEYELKFADKGSRIYRMEAKFH.

Residues Glu-43, Glu-68, Asp-95, and Asp-117 each coordinate S-adenosyl-L-methionine. Asp-117 is an active-site residue. Substrate contacts are provided by residues Lys-121, Asp-153, and 190-193; that span reads TEYE.

Belongs to the class I-like SAM-binding methyltransferase superfamily. TrmB family.

The enzyme catalyses guanosine(46) in tRNA + S-adenosyl-L-methionine = N(7)-methylguanosine(46) in tRNA + S-adenosyl-L-homocysteine. Its pathway is tRNA modification; N(7)-methylguanine-tRNA biosynthesis. Functionally, catalyzes the formation of N(7)-methylguanine at position 46 (m7G46) in tRNA. This chain is tRNA (guanine-N(7)-)-methyltransferase, found in Staphylococcus carnosus (strain TM300).